The following is a 125-amino-acid chain: Large ribosomal subunit protein bL12 (125 aa).

Belongs to the bacterial ribosomal protein bL12 family. As to quaternary structure, homodimer. Part of the ribosomal stalk of the 50S ribosomal subunit. Forms a multimeric L10(L12)X complex, where L10 forms an elongated spine to which 2 to 4 L12 dimers bind in a sequential fashion. Binds GTP-bound translation factors.

In terms of biological role, forms part of the ribosomal stalk which helps the ribosome interact with GTP-bound translation factors. Is thus essential for accurate translation. The sequence is that of Large ribosomal subunit protein bL12 from Thermoanaerobacter pseudethanolicus (strain ATCC 33223 / 39E) (Clostridium thermohydrosulfuricum).